We begin with the raw amino-acid sequence, 166 residues long: Small ribosomal subunit protein uS5 (166 aa).

In terms of domain architecture, S5 DRBM spans 11 to 74 (LQEKLIAVNR…EKARRNMINV (64 aa)).

The protein belongs to the universal ribosomal protein uS5 family. As to quaternary structure, part of the 30S ribosomal subunit. Contacts proteins S4 and S8.

In terms of biological role, with S4 and S12 plays an important role in translational accuracy. Functionally, located at the back of the 30S subunit body where it stabilizes the conformation of the head with respect to the body. This Mannheimia succiniciproducens (strain KCTC 0769BP / MBEL55E) protein is Small ribosomal subunit protein uS5.